The following is a 932-amino-acid chain: Protocadherin gamma-A12 (932 aa).

Positions 1-29 (MIPARLHRDYKGLVLLGILLGTLWETGCT) are cleaved as a signal peptide. Cadherin domains are found at residues 30-133 (QIRY…APYF), 134-242 (RESE…APAF), 243-347 (AQPE…APEV), 348-452 (VLTS…PPVF), 453-562 (PQAS…APEI), and 570-683 (DGST…SPAN). At 30–692 (QIRYSVPEEL…NSETSDLTLY (663 aa)) the chain is on the extracellular side. 3 N-linked (GlcNAc...) asparagine glycosylation sites follow: Asn265, Asn419, and Asn545. A helical membrane pass occupies residues 693 to 713 (LVVAVAAVSCVFLAFVILLLA). Over 714 to 932 (LRLRRWHKSR…KKKSGKKEKK (219 aa)) the chain is Cytoplasmic. 2 disordered regions span residues 803-841 (GHGL…WPNN) and 902-932 (ATLT…KEKK). Polar residues predominate over residues 816–841 (WRFSQAQRPGTSGSQNGDDTGTWPNN). Positions 922–932 (NKKKSGKKEKK) are enriched in basic residues.

The protein localises to the cell membrane. In terms of biological role, potential calcium-dependent cell-adhesion protein. May be involved in the establishment and maintenance of specific neuronal connections in the brain. This Pan troglodytes (Chimpanzee) protein is Protocadherin gamma-A12 (PCDHGA12).